The primary structure comprises 634 residues: Tyrosine-protein kinase transforming protein erbB (634 aa).

Residues 132-399 enclose the Protein kinase domain; that stretch reads FKKVKVLGSG…KMARDPPRYL (268 aa). ATP contacts are provided by residues 138 to 146 and Lys-165; that span reads LGSGAFGTV. Asp-257 serves as the catalytic Proton acceptor.

Belongs to the protein kinase superfamily. Tyr protein kinase family. EGF receptor subfamily.

The enzyme catalyses L-tyrosyl-[protein] + ATP = O-phospho-L-tyrosyl-[protein] + ADP + H(+). This Avian leukosis virus (ALV) protein is Tyrosine-protein kinase transforming protein erbB (V-ERBB).